Consider the following 633-residue polypeptide: MADSLDHAPAQANNLPQFLAMTIGAIGVVYGDIGTSPLYAFREALRPFGPDGVERAEVVGLISLMLWTLTIIVTFKYVLFLLRADNDGEGGTLSLLALLMKKAPRYTTLMFMAGILGAALFIGDAMITPALSVLSAVEGLKLVTPAFHDYVLPISVGIMVLLFAVQSRGTGAVSIFFGPITLIWFLVLGAAGVAHIGDDLAILAAFNPVNAVTFLWNAGFVGFIVLGAVFLTVTGAEALYADLGHFGRGPIQAAWFAVVFPALTLNYLGQGALVLSHPEAVSDPFFLMFPNWALLPVVLLATAATIIASQAVITGAFSLVRQAINLGFLPRFEICFTSETQTGQIYLPFVNNALLAGVIVLMFMFGSSESLATAYGISVTGAMVVTTVLAFEFARHQWGWSTLTATAVLLPLLVLELFFLGANLFKIHDGGYVPILIAGTLMTTMWTWRKGVSLLREKTARQDIPLSQFMAMVERKSEHAPVEVPGTAIFLTATPDTTPAVLLHNIKHNHVLHQHNVILTIKTARVPYVPEKDRYTIEKLSDRFSLLELRFGFMDDQNVSRALARCRKEGFKFEIMSTSFYLGRRKLIAAPQSGLPQWQDKLFIAMADSAIDPTEYFHLPPNRVVELGEQVVI.

Transmembrane regions (helical) follow at residues 18-38 (FLAM…TSPL), 61-81 (LISL…VLFL), 109-129 (LMFM…MITP), 145-165 (PAFH…LFAV), 173-193 (VSIF…AAGV), 211-231 (AVTF…AVFL), 255-275 (WFAV…ALVL), 287-307 (LMFP…ATII), 345-365 (IYLP…MFMF), 371-391 (LATA…VLAF), 405-425 (ATAV…ANLF), and 427-447 (IHDG…TMWT).

It belongs to the HAK/KUP transporter (TC 2.A.72) family.

It is found in the cell inner membrane. It carries out the reaction K(+)(in) + H(+)(in) = K(+)(out) + H(+)(out). In terms of biological role, transport of potassium into the cell. Likely operates as a K(+):H(+) symporter. The chain is Probable potassium transport system protein Kup 2 from Sinorhizobium medicae (strain WSM419) (Ensifer medicae).